Reading from the N-terminus, the 462-residue chain is Sensor histidine kinase RegB (462 aa).

The Cytoplasmic segment spans residues Met1–Leu25. Residues Leu26–Leu45 form a helical membrane-spanning segment. At Gly46–Met51 the chain is on the extracellular side. A helical membrane pass occupies residues Gly52–Phe70. Over Val71–Leu78 the chain is Cytoplasmic. Residues Thr79 to Phe96 traverse the membrane as a helical segment. Residues Leu97–Gly103 are Extracellular-facing. A helical transmembrane segment spans residues Leu104–Leu123. Residues Glu124–Val129 are Cytoplasmic-facing. The helical transmembrane segment at Ile130 to Leu149 threads the bilayer. At Ile150 to Glu164 the chain is on the extracellular side. Residues Phe165–Ser182 form a helical membrane-spanning segment. The Cytoplasmic segment spans residues Arg183–Thr462. Positions Ala218–Arg445 constitute a Histidine kinase domain. His221 bears the Phosphohistidine; by autocatalysis mark.

The protein localises to the cell inner membrane. It catalyses the reaction ATP + protein L-histidine = ADP + protein N-phospho-L-histidine.. In terms of biological role, member of the two-component regulatory system RegB/RegA. Involved in the positive regulation of photosynthesis gene expression in response to anaerobiosis. Also involved in positive regulation of the cbbI and cbbII Calvin cycle CO2 fixation operons, as well as in regulation of expression of genes involved in alternative CO2 fixation pathways. Phosphorylates RegA/PrrA. The sequence is that of Sensor histidine kinase RegB (regB) from Cereibacter sphaeroides (strain ATCC 17023 / DSM 158 / JCM 6121 / CCUG 31486 / LMG 2827 / NBRC 12203 / NCIMB 8253 / ATH 2.4.1.) (Rhodobacter sphaeroides).